We begin with the raw amino-acid sequence, 461 residues long: Argininosuccinate lyase (461 aa).

The protein belongs to the lyase 1 family. Argininosuccinate lyase subfamily.

Its subcellular location is the cytoplasm. It carries out the reaction 2-(N(omega)-L-arginino)succinate = fumarate + L-arginine. It participates in amino-acid biosynthesis; L-arginine biosynthesis; L-arginine from L-ornithine and carbamoyl phosphate: step 3/3. This Dehalococcoides mccartyi (strain ATCC BAA-2100 / JCM 16839 / KCTC 5957 / BAV1) protein is Argininosuccinate lyase.